Consider the following 255-residue polypeptide: Triosephosphate isomerase (255 aa).

A substrate-binding site is contributed by 10-12 (NWK). Residue histidine 96 is the Electrophile of the active site. The active-site Proton acceptor is glutamate 169. Residues glycine 175, serine 214, and 235-236 (GG) contribute to the substrate site.

Belongs to the triosephosphate isomerase family. As to quaternary structure, homodimer.

Its subcellular location is the cytoplasm. The catalysed reaction is D-glyceraldehyde 3-phosphate = dihydroxyacetone phosphate. It functions in the pathway carbohydrate biosynthesis; gluconeogenesis. It participates in carbohydrate degradation; glycolysis; D-glyceraldehyde 3-phosphate from glycerone phosphate: step 1/1. Involved in the gluconeogenesis. Catalyzes stereospecifically the conversion of dihydroxyacetone phosphate (DHAP) to D-glyceraldehyde-3-phosphate (G3P). This is Triosephosphate isomerase from Coxiella burnetii (strain Dugway 5J108-111).